A 283-amino-acid polypeptide reads, in one-letter code: Protein MGARP (283 aa).

Positions 1-36 are disordered; sequence MYLRRAVSKTLALPRRAPPGPAPLGKDASLRRMSSR. Over 1–41 the chain is Cytoplasmic; sequence MYLRRAVSKTLALPRRAPPGPAPLGKDASLRRMSSRKFPGT. A helical; Anchor for type IV membrane protein membrane pass occupies residues 42-64; sequence SGSNMIYYLVVGVTVSAGGYYTY. The Mitochondrial intermembrane portion of the chain corresponds to 65-283; the sequence is KALTSKQVRR…VTEETASPQG (219 aa). 2 disordered regions span residues 78–101 and 118–283; these read VAEP…EHVA and AESV…SPQG. Low complexity predominate over residues 128–160; it reads EAAVVLPEESQASAPSEVPAEAAVVEASLSSSE. 2 stretches are compositionally biased toward polar residues: residues 171-184 and 199-220; these read VETT…TQEV and ADTS…QEGA. Positions 221 to 245 are enriched in basic and acidic residues; the sequence is DTTKEEADNSKEAEGTTTEDPRSIS.

In terms of assembly, interacts with RHOT1/Miro-1, RHOT2/Miro-2, TRAK1/OIP106 and TRAK2/GRIF1. In terms of tissue distribution, expressed in the ovary, testis, brain, adrenal glands and the compartments of the visual nervous system. Expressed in corneal endothelium (CE) (at protein level). Expressed in steroidogenic tissues with the highest level of expression observed in the adrenal gland. Weakly expressed in placenta. Weakly expressed in astrocytes and neurons under normoxia. Strongly expressed in astrocytes and neurons under hypoxia. Expressed in each layer of the retina, with particularly higher staining in the inner segment of the photoreceptor (IS), the outer plexiform layer (OPL) and the ganglion cell layer (GCL).

Its subcellular location is the mitochondrion. It localises to the mitochondrion outer membrane. The protein resides in the mitochondrion inner membrane. Its function is as follows. Plays a role in the trafficking of mitochondria along microtubules. Regulates the kinesin-mediated axonal transport of mitochondria to nerve terminals along microtubules during hypoxia. Participates in the translocation of TRAK2/GRIF1 from the cytoplasm to the mitochondrion. Also plays a role in steroidogenesis through maintenance of mitochondrial abundance and morphology. Plays an inhibitory role during neocortex development by regulating mitochondrial morphology, distribution and motility in neocortical neurons. The chain is Protein MGARP (Mgarp) from Mus musculus (Mouse).